We begin with the raw amino-acid sequence, 157 residues long: Large ribosomal subunit protein uL15 (157 aa).

Positions 1-56 (MRLEDIRPQPGSTRRRRRLGRGIAAGQGASCGKGMRGQKARKGGGPRPGFEGGQTP) are disordered. Residues 23-35 (IAAGQGASCGKGM) are compositionally biased toward gly residues.

Belongs to the universal ribosomal protein uL15 family. Part of the 50S ribosomal subunit.

Functionally, binds to the 23S rRNA. This Synechococcus sp. (strain JA-3-3Ab) (Cyanobacteria bacterium Yellowstone A-Prime) protein is Large ribosomal subunit protein uL15.